We begin with the raw amino-acid sequence, 402 residues long: Phosphoglycerate kinase (402 aa).

Residues 24 to 26 (DFN), Arg-40, 63 to 66 (HFGR), Arg-122, and Arg-155 contribute to the substrate site. ATP contacts are provided by residues Lys-206, Gly-297, Glu-328, and 357–360 (GGDS).

This sequence belongs to the phosphoglycerate kinase family. In terms of assembly, monomer.

It is found in the cytoplasm. The catalysed reaction is (2R)-3-phosphoglycerate + ATP = (2R)-3-phospho-glyceroyl phosphate + ADP. Its pathway is carbohydrate degradation; glycolysis; pyruvate from D-glyceraldehyde 3-phosphate: step 2/5. This chain is Phosphoglycerate kinase, found in Synechococcus elongatus (strain ATCC 33912 / PCC 7942 / FACHB-805) (Anacystis nidulans R2).